The following is a 112-amino-acid chain: Small ribosomal subunit protein uS11c (112 aa).

The protein belongs to the universal ribosomal protein uS11 family. In terms of assembly, part of the 30S ribosomal subunit.

Its subcellular location is the plastid. The polypeptide is Small ribosomal subunit protein uS11c (Euglena longa (Euglenophycean alga)).